The chain runs to 459 residues: ATP-dependent protease ATPase subunit HslU (459 aa).

Residues V26, 68 to 73 (GVGKTE), D271, E337, and R409 contribute to the ATP site.

This sequence belongs to the ClpX chaperone family. HslU subfamily. A double ring-shaped homohexamer of HslV is capped on each side by a ring-shaped HslU homohexamer. The assembly of the HslU/HslV complex is dependent on binding of ATP.

Its subcellular location is the cytoplasm. Its function is as follows. ATPase subunit of a proteasome-like degradation complex; this subunit has chaperone activity. The binding of ATP and its subsequent hydrolysis by HslU are essential for unfolding of protein substrates subsequently hydrolyzed by HslV. HslU recognizes the N-terminal part of its protein substrates and unfolds these before they are guided to HslV for hydrolysis. The protein is ATP-dependent protease ATPase subunit HslU of Xylella fastidiosa (strain 9a5c).